A 174-amino-acid chain; its full sequence is Cytoglobin-1 (174 aa).

The 151-residue stretch at 15-165 folds into the Globin domain; the sequence is SLTEEDVCVI…LYWQMNRVYA (151 aa). Heme b-binding residues include histidine 78 and histidine 110.

Belongs to the globin family. Monomeric. As to expression, expressed in all tissues examined with highest levels in brain, eye, gut and heart.

The protein localises to the cytoplasm. It localises to the nucleus. The catalysed reaction is Fe(II)-heme b-[protein] + nitric oxide + O2 = Fe(III)-heme b-[protein] + nitrate. It carries out the reaction Fe(III)-heme b-[protein] + nitric oxide + H2O = Fe(II)-heme b-[protein] + nitrite + 2 H(+). It catalyses the reaction 2 superoxide + 2 H(+) = H2O2 + O2. The enzyme catalyses H2O2 + AH2 = A + 2 H2O. Functionally, probable multifunctional globin with a hexacoordinated heme iron required for the catalysis of various reactions depending on redox condition of the cell as well as oxygen availability. Has a nitric oxide dioxygenase (NOD) activity and is most probably involved in cell-mediated and oxygen-dependent nitric oxide consumption. Under normoxic conditions functions as a nitric oxide dioxygenase (NOD) but under hypoxic conditions the globin may switch its function to that of a nitrite (NO2) reductase (NiR), generating nitric oxide. Could also have peroxidase and superoxide dismutase activities, detoxifying reactive oxygen species and protecting cells against oxidative stress. Also binds dioxygen with low affinity and could function as an oxygen sensor but has probably no function as a respiratory oxygen carrier. The polypeptide is Cytoglobin-1 (cygb1) (Danio rerio (Zebrafish)).